A 97-amino-acid polypeptide reads, in one-letter code: Small ribosomal subunit protein bS6 (97 aa).

This sequence belongs to the bacterial ribosomal protein bS6 family.

Binds together with bS18 to 16S ribosomal RNA. The protein is Small ribosomal subunit protein bS6 (rpsF) of Lactococcus lactis subsp. lactis (strain IL1403) (Streptococcus lactis).